We begin with the raw amino-acid sequence, 172 residues long: 3-hydroxydecanoyl-[acyl-carrier-protein] dehydratase (172 aa).

Residue His-71 is part of the active site.

This sequence belongs to the thioester dehydratase family. FabA subfamily. Homodimer.

The protein localises to the cytoplasm. The catalysed reaction is a (3R)-hydroxyacyl-[ACP] = a (2E)-enoyl-[ACP] + H2O. It carries out the reaction (3R)-hydroxydecanoyl-[ACP] = (2E)-decenoyl-[ACP] + H2O. It catalyses the reaction (2E)-decenoyl-[ACP] = (3Z)-decenoyl-[ACP]. Its pathway is lipid metabolism; fatty acid biosynthesis. Its function is as follows. Necessary for the introduction of cis unsaturation into fatty acids. Catalyzes the dehydration of (3R)-3-hydroxydecanoyl-ACP to E-(2)-decenoyl-ACP and then its isomerization to Z-(3)-decenoyl-ACP. Can catalyze the dehydratase reaction for beta-hydroxyacyl-ACPs with saturated chain lengths up to 16:0, being most active on intermediate chain length. This is 3-hydroxydecanoyl-[acyl-carrier-protein] dehydratase from Enterobacter sp. (strain 638).